The sequence spans 341 residues: MLTNASQVLLRNRDLVKDQSVLVLNYEGDHLPKELLNTARSVCGLALDYHHHLMMQPYAAANLTLHFGHQLPNDESFDTVIVYFPKAKALAPYLFNLAAKHLKPQGQLIVVGENKGGIKSLPKQLPSYFDKPFKADNARHCIVFLSELNAAAPTLKLTDWISRYQLDTPQGQVTICNLVGVFSEKKLDEGTKLLLENLPKMRGKVLDFGCGAGVIAAALLKAQPELTLECVDINAMALASCEFTLQANGFNAKIFASDGLAQAAGRYDGIISNPPFHDGLASTTNIATNFVKDSAANLTTGGLFHIVANRHLPYSDTIAEHFGSVDVTAENNKYKIYSNVK.

This sequence belongs to the methyltransferase superfamily. RsmC family. Monomer.

The protein localises to the cytoplasm. The catalysed reaction is guanosine(1207) in 16S rRNA + S-adenosyl-L-methionine = N(2)-methylguanosine(1207) in 16S rRNA + S-adenosyl-L-homocysteine + H(+). Specifically methylates the guanine in position 1207 of 16S rRNA in the 30S particle. The polypeptide is Ribosomal RNA small subunit methyltransferase C (Shewanella halifaxensis (strain HAW-EB4)).